We begin with the raw amino-acid sequence, 199 residues long: Thymidine kinase (199 aa).

ATP contacts are provided by residues 9–16 (GAMSSGKT) and 93–96 (DEAQ). The active-site Proton acceptor is Glu94. Zn(2+)-binding residues include Cys151, Cys154, Cys188, and His191.

This sequence belongs to the thymidine kinase family. In terms of assembly, homotetramer.

Its subcellular location is the cytoplasm. It carries out the reaction thymidine + ATP = dTMP + ADP + H(+). The protein is Thymidine kinase of Lactobacillus acidophilus (strain ATCC 700396 / NCK56 / N2 / NCFM).